Here is a 459-residue protein sequence, read N- to C-terminus: Uterine milk protein (459 aa).

The first 25 residues, 1–25 (MSHGRMNLALSLVFILCGLFNSIFC), serve as a signal peptide directing secretion. Asn268 is a glycosylation site (N-linked (GlcNAc...) asparagine).

It belongs to the serpin family. UTMP subfamily.

The polypeptide is Uterine milk protein (Bos taurus (Bovine)).